We begin with the raw amino-acid sequence, 300 residues long: uncharacterized protein (300 aa).

Solcar repeat units follow at residues 10 to 101 (ESQT…VKDF), 119 to 199 (GKAI…AKEY), and 212 to 294 (FQNF…LIPF). 6 helical membrane-spanning segments follow: residues 16–36 (IVGSASAGILELSLFHPVDTI), 70–86 (ATSLFPGLGYAACYKIV), 121–141 (AIMHATAGSIVGIGEIFLLPL), 178–198 (TAARNAPGSFALFGGNAFAKE), 215–235 (FFTSIAGASASLIVSAPLDVI), and 275–295 (LTTGPKLVFSFTMAQTLIPFF).

Belongs to the mitochondrial carrier (TC 2.A.29) family.

Its subcellular location is the mitochondrion inner membrane. This is an uncharacterized protein from Schizosaccharomyces pombe (strain 972 / ATCC 24843) (Fission yeast).